The sequence spans 79 residues: MARSRLTATSVSQVQENGFVKKLEPKSGWMTFLEVTGKICEMLFCPEAILLTRKDTPYCETGLIFLTLTKTIANTYFYF.

As to expression, expressed in leukocytes, lung, spleen, liver, heart, kidney, muscle and uterine cervix. Down-regulated in cervical cancer.

In terms of biological role, may act as a tumor suppressor. Promotes apoptosis of cancer cells. The sequence is that of Suppressor of tumorigenicity 20 protein (ST20) from Homo sapiens (Human).